The chain runs to 168 residues: Mediator of RNA polymerase II transcription subunit 7a (168 aa).

Coiled-coil stretches lie at residues 64 to 92 (KDSNLDYKNELRSLNRELQLHILELADVL) and 132 to 166 (IMELQIQQRKQAVEDIKRRREEAQRLLKDAYLTLD).

Belongs to the Mediator complex subunit 7 family. As to quaternary structure, component of the Mediator complex. Interacts with MEE14/CBP1.

Its subcellular location is the nucleus. Component of the Mediator complex, a coactivator involved in the regulated transcription of nearly all RNA polymerase II-dependent genes. Mediator functions as a bridge to convey information from gene-specific regulatory proteins to the basal RNA polymerase II transcription machinery. The Mediator complex, having a compact conformation in its free form, is recruited to promoters by direct interactions with regulatory proteins and serves for the assembly of a functional pre-initiation complex with RNA polymerase II and the general transcription factors. The protein is Mediator of RNA polymerase II transcription subunit 7a (MED7A) of Arabidopsis thaliana (Mouse-ear cress).